Here is a 444-residue protein sequence, read N- to C-terminus: Dihydroorotate dehydrogenase (quinone), mitochondrial (444 aa).

A helical membrane pass occupies residues 34 to 56; that stretch reads GGASRYIIGTASVLVGAMAGFYI. FMN contacts are provided by residues 124–128 and threonine 148; that span reads AGLDK. Lysine 128 contributes to the substrate binding site. Residue 173 to 177 participates in substrate binding; it reads NRYGF. FMN is bound by residues asparagine 220 and asparagine 250. 250–255 lines the substrate pocket; sequence NVSSPN. The active-site Nucleophile is the serine 253. Residues lysine 301 and serine 329 each coordinate FMN. Residue 330–331 coordinates substrate; that stretch reads NT. FMN contacts are provided by residues glycine 355, glycine 385, and 406 to 407; that span reads YT.

This sequence belongs to the dihydroorotate dehydrogenase family. Type 2 subfamily. The cofactor is FMN.

Its subcellular location is the mitochondrion inner membrane. The enzyme catalyses (S)-dihydroorotate + a quinone = orotate + a quinol. It participates in pyrimidine metabolism; UMP biosynthesis via de novo pathway; orotate from (S)-dihydroorotate (quinone route): step 1/1. Its function is as follows. Catalyzes the conversion of dihydroorotate to orotate with quinone as electron acceptor. The sequence is that of Dihydroorotate dehydrogenase (quinone), mitochondrial (URA9) from Eremothecium gossypii (strain ATCC 10895 / CBS 109.51 / FGSC 9923 / NRRL Y-1056) (Yeast).